We begin with the raw amino-acid sequence, 81 residues long: 2,3-bisphosphoglycerate-independent phosphoglycerate mutase (81 aa).

S14 functions as the Phosphoserine intermediate in the catalytic mechanism. A Mn(2+)-binding site is contributed by S14. Residue H75 participates in substrate binding.

This sequence belongs to the BPG-independent phosphoglycerate mutase family. In terms of assembly, monomer. Requires Mn(2+) as cofactor.

The enzyme catalyses (2R)-2-phosphoglycerate = (2R)-3-phosphoglycerate. The protein operates within carbohydrate degradation; glycolysis; pyruvate from D-glyceraldehyde 3-phosphate: step 3/5. Functionally, catalyzes the interconversion of 2-phosphoglycerate and 3-phosphoglycerate. This is 2,3-bisphosphoglycerate-independent phosphoglycerate mutase (gpmI) from Tomato big bud phytoplasma.